The chain runs to 434 residues: 3-isopropylmalate dehydratase large subunit 1 (434 aa).

Cys308, Cys368, and Cys371 together coordinate [4Fe-4S] cluster.

The protein belongs to the aconitase/IPM isomerase family. LeuC type 2 subfamily. As to quaternary structure, heterodimer of LeuC and LeuD. The cofactor is [4Fe-4S] cluster.

It carries out the reaction (2R,3S)-3-isopropylmalate = (2S)-2-isopropylmalate. Its pathway is amino-acid biosynthesis; L-leucine biosynthesis; L-leucine from 3-methyl-2-oxobutanoate: step 2/4. In terms of biological role, catalyzes the isomerization between 2-isopropylmalate and 3-isopropylmalate, via the formation of 2-isopropylmaleate. The polypeptide is 3-isopropylmalate dehydratase large subunit 1 (Deinococcus radiodurans (strain ATCC 13939 / DSM 20539 / JCM 16871 / CCUG 27074 / LMG 4051 / NBRC 15346 / NCIMB 9279 / VKM B-1422 / R1)).